A 1364-amino-acid chain; its full sequence is DNA-directed RNA polymerase subunit beta (1364 aa).

It belongs to the RNA polymerase beta chain family. As to quaternary structure, the RNAP catalytic core consists of 2 alpha, 1 beta, 1 beta' and 1 omega subunit. When a sigma factor is associated with the core the holoenzyme is formed, which can initiate transcription.

It catalyses the reaction RNA(n) + a ribonucleoside 5'-triphosphate = RNA(n+1) + diphosphate. Functionally, DNA-dependent RNA polymerase catalyzes the transcription of DNA into RNA using the four ribonucleoside triphosphates as substrates. The protein is DNA-directed RNA polymerase subunit beta of Desulfatibacillum aliphaticivorans.